A 214-amino-acid chain; its full sequence is NAD(P)H-quinone oxidoreductase subunit 5, chloroplastic (214 aa).

Transmembrane regions (helical) follow at residues 84-104 (LFPL…GIPF) and 152-172 (SLAI…YSFF).

It belongs to the complex I subunit 5 family. NDH is composed of at least 16 different subunits, 5 of which are encoded in the nucleus.

It is found in the plastid. The protein resides in the chloroplast thylakoid membrane. The catalysed reaction is a plastoquinone + NADH + (n+1) H(+)(in) = a plastoquinol + NAD(+) + n H(+)(out). The enzyme catalyses a plastoquinone + NADPH + (n+1) H(+)(in) = a plastoquinol + NADP(+) + n H(+)(out). NDH shuttles electrons from NAD(P)H:plastoquinone, via FMN and iron-sulfur (Fe-S) centers, to quinones in the photosynthetic chain and possibly in a chloroplast respiratory chain. The immediate electron acceptor for the enzyme in this species is believed to be plastoquinone. Couples the redox reaction to proton translocation, and thus conserves the redox energy in a proton gradient. This Brachypodium sylvaticum (False brome) protein is NAD(P)H-quinone oxidoreductase subunit 5, chloroplastic (ndhF).